The chain runs to 316 residues: ATP synthase gamma chain (316 aa).

Belongs to the ATPase gamma chain family. In terms of assembly, F-type ATPases have 2 components, CF(1) - the catalytic core - and CF(0) - the membrane proton channel. CF(1) has five subunits: alpha(3), beta(3), gamma(1), delta(1), epsilon(1). CF(0) has three main subunits: a, b and c.

It localises to the cellular thylakoid membrane. Produces ATP from ADP in the presence of a proton gradient across the membrane. The gamma chain is believed to be important in regulating ATPase activity and the flow of protons through the CF(0) complex. In Prochlorococcus marinus (strain NATL2A), this protein is ATP synthase gamma chain.